A 319-amino-acid polypeptide reads, in one-letter code: Multivesicular body subunit 12B (319 aa).

Positions 1-50 (MRSCFCVRRSRDPPPPQPPPPPPQRGTDQSTMPEVKDLSEALPETSMDPI) are disordered. Residues 13–24 (PPPPQPPPPPPQ) show a composition bias toward pro residues. A phosphoserine mark is found at serine 46 and serine 101. Residues 47-193 (MDPITGVGVV…SMGIWYRMGR (147 aa)) form the MABP domain. A phosphothreonine mark is found at threonine 122, threonine 204, and threonine 205. The tract at residues 195 to 222 (PRNHDSSQPTTPSQSSAASTPAPNLPRH) is disordered. Over residues 200-216 (SSQPTTPSQSSAASTPA) the composition is skewed to low complexity. A Phosphoserine modification is found at serine 224. The region spanning 254–303 (MDGVPFMISEKFSCVPESMQPFDLLGITIKSLAEIEKEYEYSFRTEQSAA) is the UMA domain. Positions 299 to 319 (EQSAAARLPPSPTRCQQIPQS) are disordered. At serine 309 the chain carries Phosphoserine.

It belongs to the MVB12 family. In terms of assembly, component of the ESCRT-I complex (endosomal sorting complex required for transport I) which consists of TSG101, VPS28, a VPS37 protein (VPS37A to -D) and MVB12A or MVB12B in a 1:1:1:1 stoichiometry. Interacts with TSG101; the association appears to be mediated by the TSG101-VPS37 binary subcomplex. Interacts with VPS28. Interacts with VPS37B; the association appears to be mediated by the TSG101-VPS37 binary subcomplex. Interacts with VPS37C; the association appears to be mediated by the TSG101-VPS37 binary subcomplex.

The protein localises to the endosome. The protein resides in the late endosome membrane. Functionally, component of the ESCRT-I complex, a regulator of vesicular trafficking process. Required for the sorting of endocytic ubiquitinated cargos into multivesicular bodies. The polypeptide is Multivesicular body subunit 12B (MVB12B) (Homo sapiens (Human)).